We begin with the raw amino-acid sequence, 554 residues long: CTP synthase (554 aa).

Residues Met1–Ile270 are amidoligase domain. Ser13 is a binding site for CTP. Ser13 contributes to the UTP binding site. Residues Ser14–Ile19 and Asp71 contribute to the ATP site. Mg(2+) is bound by residues Asp71 and Glu144. CTP is bound by residues Asp151 to Glu153, Lys191 to Gln196, and Lys227. Residues Lys191–Gln196 and Lys227 each bind UTP. The Glutamine amidotransferase type-1 domain occupies Thr295–Arg547. Residue Gly356 participates in L-glutamine binding. Residue Cys383 is the Nucleophile; for glutamine hydrolysis of the active site. L-glutamine contacts are provided by residues Leu384–Gln387, Glu407, and Arg473. Active-site residues include His520 and Glu522.

The protein belongs to the CTP synthase family. As to quaternary structure, homotetramer.

The enzyme catalyses UTP + L-glutamine + ATP + H2O = CTP + L-glutamate + ADP + phosphate + 2 H(+). It catalyses the reaction L-glutamine + H2O = L-glutamate + NH4(+). It carries out the reaction UTP + NH4(+) + ATP = CTP + ADP + phosphate + 2 H(+). It participates in pyrimidine metabolism; CTP biosynthesis via de novo pathway; CTP from UDP: step 2/2. Its activity is regulated as follows. Allosterically activated by GTP, when glutamine is the substrate; GTP has no effect on the reaction when ammonia is the substrate. The allosteric effector GTP functions by stabilizing the protein conformation that binds the tetrahedral intermediate(s) formed during glutamine hydrolysis. Inhibited by the product CTP, via allosteric rather than competitive inhibition. Its function is as follows. Catalyzes the ATP-dependent amination of UTP to CTP with either L-glutamine or ammonia as the source of nitrogen. Regulates intracellular CTP levels through interactions with the four ribonucleotide triphosphates. In Ralstonia nicotianae (strain ATCC BAA-1114 / GMI1000) (Ralstonia solanacearum), this protein is CTP synthase.